The following is a 298-amino-acid chain: NAD kinase (298 aa).

The active-site Proton acceptor is D80. NAD(+) contacts are provided by residues 80–81 (DG), 154–155 (ND), R182, D184, 195–200 (TAYALS), A219, and Q253.

It belongs to the NAD kinase family. Requires a divalent metal cation as cofactor.

The protein resides in the cytoplasm. The catalysed reaction is NAD(+) + ATP = ADP + NADP(+) + H(+). Functionally, involved in the regulation of the intracellular balance of NAD and NADP, and is a key enzyme in the biosynthesis of NADP. Catalyzes specifically the phosphorylation on 2'-hydroxyl of the adenosine moiety of NAD to yield NADP. The sequence is that of NAD kinase from Acidovorax sp. (strain JS42).